The following is a 200-amino-acid chain: Arylesterase (200 aa).

Positions Met-1 to Ala-19 are cleaved as a signal peptide. Ser-29 (nucleophile) is an active-site residue. Active-site residues include Asp-176 and His-179.

It belongs to the 'GDSL' lipolytic enzyme family. Homodimer.

It carries out the reaction a phenyl acetate + H2O = a phenol + acetate + H(+). Functionally, favors the hydrolysis of several arylesters. This is Arylesterase from Vibrio mimicus.